A 270-amino-acid polypeptide reads, in one-letter code: Ribosomal RNA small subunit methyltransferase J (270 aa).

S-adenosyl-L-methionine contacts are provided by residues 126–127 (ER) and D182.

It belongs to the methyltransferase superfamily. RsmJ family.

The protein resides in the cytoplasm. It carries out the reaction guanosine(1516) in 16S rRNA + S-adenosyl-L-methionine = N(2)-methylguanosine(1516) in 16S rRNA + S-adenosyl-L-homocysteine + H(+). Functionally, specifically methylates the guanosine in position 1516 of 16S rRNA. This is Ribosomal RNA small subunit methyltransferase J from Acinetobacter baylyi (strain ATCC 33305 / BD413 / ADP1).